Consider the following 685-residue polypeptide: DNA ligase (685 aa).

Residues 34–38 (DAVFD), 83–84 (SL), and Glu113 each bind NAD(+). Lys115 acts as the N6-AMP-lysine intermediate in catalysis. NAD(+) is bound by residues Arg136, Glu173, Lys297, and Lys321. Residues Cys415, Cys418, Cys433, and Cys438 each coordinate Zn(2+). The BRCT domain occupies 607 to 685 (QEKLQFSGKT…EQELMTLISN (79 aa)).

Belongs to the NAD-dependent DNA ligase family. LigA subfamily. Mg(2+) is required as a cofactor. The cofactor is Mn(2+).

It catalyses the reaction NAD(+) + (deoxyribonucleotide)n-3'-hydroxyl + 5'-phospho-(deoxyribonucleotide)m = (deoxyribonucleotide)n+m + AMP + beta-nicotinamide D-nucleotide.. In terms of biological role, DNA ligase that catalyzes the formation of phosphodiester linkages between 5'-phosphoryl and 3'-hydroxyl groups in double-stranded DNA using NAD as a coenzyme and as the energy source for the reaction. It is essential for DNA replication and repair of damaged DNA. This Prochlorococcus marinus (strain SARG / CCMP1375 / SS120) protein is DNA ligase.